The sequence spans 784 residues: Transcription factor E4F1 (784 aa).

Residues 41–85 (GFLGLPAPFSEEDEDDVHRCGRCQAEFTALEDFVQHKIQKACQRA) form a required for ubiquitin ligase activity region. At serine 50 the chain carries Phosphoserine. Positions 184 to 263 (LLVNKDGRYV…GKSFRESGAL (80 aa)) are mediates dimerization, DNA-binding, transcription repression of CCNA2 and interaction with HMGA2. 2 consecutive C2H2-type zinc fingers follow at residues 192-214 (YVCA…MVTH) and 220-242 (HECK…HRRH). Residues 248–272 (YKCSKCGKSFRESGALTRHLKSLTP) form a C2H2-type 3; degenerate zinc finger. Positions 369–566 (NLLHQAMQNS…REKGSLVRHV (198 aa)) are mediates interaction with CDKN2A. 5 consecutive C2H2-type zinc fingers follow at residues 435–457 (HPCP…KRGH), 463–485 (FACA…QEVH), 491–513 (FRCG…RRVH), 519–541 (YPCP…FRTH), and 547–569 (HVCQ…VRHH). Residues 435-599 (HPCPQCSETF…LNRHLRTKGG (165 aa)) are interaction with BMI1. Positions 521–580 (CPKCGKRYKTKNAQQVHFRTHLEEKPHVCQFCSRGFREKGSLVRHVRHHTGEKPFKCYKC) are mediates interaction with TP53. The C2H2-type 9; degenerate zinc finger occupies 575 to 597 (FKCYKCGRGFAEHGTLNRHLRTK). Residues 575–597 (FKCYKCGRGFAEHGTLNRHLRTK) form a mediates interaction with RASSF1 region.

As to quaternary structure, homodimer; binds DNA as a dimer. Forms a complex with CDKN2A and TP53. Interactions with TP53, RB1, ANP32A, BMI1 and FHL2 regulate E4F1 activity. Interacts with HDAC1, HMGA2 and RASSF1. (Microbial infection) Interacts with HBV protein X. Post-translationally, proteolytic cleavage produces a 50 kDa N-terminal peptide (p50E4F) which has a DNA-binding activity and activates transcription in presence of the adenoviral E1A protein. The major full-length protein (p120E4F) functions as a repressor of transcription. Phosphorylated; p120E4F and p50E4F are both phosphorylated. Phosphorylation is cell cycle-dependent and differentially regulates DNA-binding activity and function of both forms. In terms of processing, may be sumoylated by UBE2I upon interaction with CDKN2A. As to expression, ubiquitously expressed.

It is found in the nucleus. It localises to the nucleoplasm. The protein resides in the cytoplasm. It catalyses the reaction S-ubiquitinyl-[E2 ubiquitin-conjugating enzyme]-L-cysteine + [acceptor protein]-L-lysine = [E2 ubiquitin-conjugating enzyme]-L-cysteine + N(6)-ubiquitinyl-[acceptor protein]-L-lysine.. Its pathway is protein modification; protein ubiquitination. Its function is as follows. May function as a transcriptional repressor. May also function as a ubiquitin ligase mediating ubiquitination of chromatin-associated TP53. Functions in cell survival and proliferation through control of the cell cycle. Functions in the p53 and pRB tumor suppressor pathways and regulates the cyclin CCNA2 transcription. Identified as a cellular target of the adenoviral oncoprotein E1A, it is required for both transcriptional activation and repression of viral genes. The protein is Transcription factor E4F1 (E4F1) of Homo sapiens (Human).